The primary structure comprises 72 residues: Alpha-elapitoxin-Djk2a (72 aa).

Intrachain disulfides connect Cys3–Cys21, Cys14–Cys42, Cys27–Cys31, Cys46–Cys57, and Cys58–Cys63.

This sequence belongs to the three-finger toxin family. Long-chain subfamily. Type II alpha-neurotoxin sub-subfamily. In terms of tissue distribution, expressed by the venom gland.

The protein resides in the secreted. Binds with high affinity to muscular (alpha-1/CHRNA1) and neuronal (alpha-7/CHRNA7) nicotinic acetylcholine receptor (nAChR) and inhibits acetylcholine from binding to the receptor, thereby impairing neuromuscular and neuronal transmission. This is Alpha-elapitoxin-Djk2a from Dendroaspis jamesoni kaimosae (Eastern Jameson's mamba).